Here is a 123-residue protein sequence, read N- to C-terminus: Small ribosomal subunit protein uS12 (123 aa).

Residue aspartate 89 is modified to 3-methylthioaspartic acid.

This sequence belongs to the universal ribosomal protein uS12 family. As to quaternary structure, part of the 30S ribosomal subunit. Contacts proteins S8 and S17. May interact with IF1 in the 30S initiation complex.

Its function is as follows. With S4 and S5 plays an important role in translational accuracy. Interacts with and stabilizes bases of the 16S rRNA that are involved in tRNA selection in the A site and with the mRNA backbone. Located at the interface of the 30S and 50S subunits, it traverses the body of the 30S subunit contacting proteins on the other side and probably holding the rRNA structure together. The combined cluster of proteins S8, S12 and S17 appears to hold together the shoulder and platform of the 30S subunit. The protein is Small ribosomal subunit protein uS12 of Brucella anthropi (strain ATCC 49188 / DSM 6882 / CCUG 24695 / JCM 21032 / LMG 3331 / NBRC 15819 / NCTC 12168 / Alc 37) (Ochrobactrum anthropi).